We begin with the raw amino-acid sequence, 884 residues long: Alanine--tRNA ligase (884 aa).

Zn(2+) is bound by residues H562, H566, C674, and H678.

Belongs to the class-II aminoacyl-tRNA synthetase family. It depends on Zn(2+) as a cofactor.

It is found in the cytoplasm. It catalyses the reaction tRNA(Ala) + L-alanine + ATP = L-alanyl-tRNA(Ala) + AMP + diphosphate. In terms of biological role, catalyzes the attachment of alanine to tRNA(Ala) in a two-step reaction: alanine is first activated by ATP to form Ala-AMP and then transferred to the acceptor end of tRNA(Ala). Also edits incorrectly charged Ser-tRNA(Ala) and Gly-tRNA(Ala) via its editing domain. The chain is Alanine--tRNA ligase from Rhizobium etli (strain ATCC 51251 / DSM 11541 / JCM 21823 / NBRC 15573 / CFN 42).